A 517-amino-acid chain; its full sequence is Dermokine (517 aa).

A signal peptide spans Met1–Ala21. 2 disordered regions span residues Val51–Arg83 and Ala123–Glu364. 2 stretches are compositionally biased toward gly residues: residues Gly127 to Gly145 and Gly167 to Gly176. Residues Arg197 to Thr206 show a composition bias toward polar residues. A compositionally biased stretch (low complexity) spans Gly212–His235. The span at Gly236–Gly250 shows a compositional bias: gly residues. Positions Asn251 to Ser289 are enriched in low complexity. Composition is skewed to gly residues over residues Gly308–Asn332 and Gly347–Gly358.

It belongs to the dermokine family. Homooligomer. Seems to be able to homodimerize and homotrimerize. Post-translationally, O-glycosylated. In terms of tissue distribution, highly expressed in stratified epithelia; such as the skin, tongue, esophagus, forestomach and vagina. Also found in lung, trachea and urinary bladder.

It localises to the secreted. Functionally, may act as a soluble regulator of keratinocyte differentiation. This chain is Dermokine (Dmkn), found in Mus musculus (Mouse).